A 340-amino-acid polypeptide reads, in one-letter code: Conidiation-specific protein 13 (340 aa).

The disordered stretch occupies residues 313-340 (AEAAAGISSGKPAADRKTKGKKGTKFRV). A compositionally biased stretch (basic residues) spans 330 to 340 (TKGKKGTKFRV).

This chain is Conidiation-specific protein 13 (con-13), found in Neurospora crassa (strain ATCC 24698 / 74-OR23-1A / CBS 708.71 / DSM 1257 / FGSC 987).